The following is a 461-amino-acid chain: Mitochondrial distribution and morphology protein 12 (461 aa).

One can recognise an SMP-LTD domain in the interval 1 to 454 (MSLDLDWNLL…YPNYYTIDLP (454 aa)). Disordered regions lie at residues 75 to 104 (RRRG…VHHG) and 226 to 301 (DASS…PSSA). Polar residues-rich tracts occupy residues 80-97 (RQTT…SPTD) and 272-288 (RATS…QNSP).

Belongs to the MDM12 family. In terms of assembly, component of the ER-mitochondria encounter structure (ERMES) or MDM complex, composed of MMM1, MDM10, MDM12 and MDM34. An MMM1 homodimer associates with one molecule of MDM12 on each side in a pairwise head-to-tail manner, and the SMP-LTD domains of MMM1 and MDM12 generate a continuous hydrophobic tunnel for phospholipid trafficking.

The protein resides in the mitochondrion outer membrane. Its subcellular location is the endoplasmic reticulum membrane. Its function is as follows. Component of the ERMES/MDM complex, which serves as a molecular tether to connect the endoplasmic reticulum (ER) and mitochondria. Components of this complex are involved in the control of mitochondrial shape and protein biogenesis, and function in nonvesicular lipid trafficking between the ER and mitochondria. MDM12 is required for the interaction of the ER-resident membrane protein MMM1 and the outer mitochondrial membrane-resident beta-barrel protein MDM10. The MDM12-MMM1 subcomplex functions in the major beta-barrel assembly pathway that is responsible for biogenesis of all mitochondrial outer membrane beta-barrel proteins, and acts in a late step after the SAM complex. The MDM10-MDM12-MMM1 subcomplex further acts in the TOM40-specific pathway after the action of the MDM12-MMM1 complex. Essential for establishing and maintaining the structure of mitochondria and maintenance of mtDNA nucleoids. The chain is Mitochondrial distribution and morphology protein 12 from Mycosarcoma maydis (Corn smut fungus).